Reading from the N-terminus, the 277-residue chain is Sulfur carrier protein FdhD (277 aa).

Cys-121 acts as the Cysteine persulfide intermediate in catalysis. 260 to 265 (FCKPGR) contacts Mo-bis(molybdopterin guanine dinucleotide).

Belongs to the FdhD family.

The protein resides in the cytoplasm. Functionally, required for formate dehydrogenase (FDH) activity. Acts as a sulfur carrier protein that transfers sulfur from IscS to the molybdenum cofactor prior to its insertion into FDH. This is Sulfur carrier protein FdhD from Shigella dysenteriae serotype 1 (strain Sd197).